The sequence spans 141 residues: Transcriptional regulator MraZ (141 aa).

2 consecutive SpoVT-AbrB domains span residues 5 to 47 (TFNL…KPAD) and 76 to 119 (ANLV…DKVQ).

It belongs to the MraZ family. As to quaternary structure, forms oligomers.

The protein localises to the cytoplasm. The protein resides in the nucleoid. This chain is Transcriptional regulator MraZ, found in Mycoplasma genitalium (strain ATCC 33530 / DSM 19775 / NCTC 10195 / G37) (Mycoplasmoides genitalium).